The primary structure comprises 648 residues: DNA mismatch repair protein MutL (648 aa).

The segment at 336-443 (ERPFEPSSPQ…SGSAGESRAR (108 aa)) is disordered. Positions 370–381 (SPESKTHSTWNE) are enriched in polar residues. Residues 383-410 (SRVDTSRAETSRESRIDSPLGERTRDIA) show a composition bias toward basic and acidic residues.

It belongs to the DNA mismatch repair MutL/HexB family.

This protein is involved in the repair of mismatches in DNA. It is required for dam-dependent methyl-directed DNA mismatch repair. May act as a 'molecular matchmaker', a protein that promotes the formation of a stable complex between two or more DNA-binding proteins in an ATP-dependent manner without itself being part of a final effector complex. This chain is DNA mismatch repair protein MutL, found in Shewanella sp. (strain ANA-3).